The chain runs to 439 residues: Enolase (439 aa).

Substrate-binding residues include His160 and Glu169. The active-site Proton donor is Glu212. Positions 247, 296, and 323 each coordinate Mg(2+). Substrate-binding residues include Glu296 and Asp323. The active-site Proton acceptor is the Lys348. Substrate is bound by residues 375-378 (SHRS) and Lys399.

Belongs to the enolase family. As to quaternary structure, homodimer. Mg(2+) is required as a cofactor.

It localises to the cytoplasm. It carries out the reaction (2R)-2-phosphoglycerate = phosphoenolpyruvate + H2O. The protein operates within carbohydrate degradation; glycolysis; pyruvate from D-glyceraldehyde 3-phosphate: step 4/5. In Rhodotorula mucilaginosa (Yeast), this protein is Enolase (ENO).